A 155-amino-acid polypeptide reads, in one-letter code: Urease accessory protein UreE (155 aa).

It belongs to the UreE family.

The protein resides in the cytoplasm. Involved in urease metallocenter assembly. Binds nickel. Probably functions as a nickel donor during metallocenter assembly. In Synechococcus sp. (strain CC9311), this protein is Urease accessory protein UreE.